Reading from the N-terminus, the 274-residue chain is Dermonecrotic toxin SdSicTox-betaIIB2ii (274 aa).

H5 is an active-site residue. The Mg(2+) site is built by E25 and D27. The active-site Nucleophile is H41. Intrachain disulfides connect C45-C51 and C47-C190. Position 85 (D85) interacts with Mg(2+).

The protein belongs to the arthropod phospholipase D family. Class II subfamily. The cofactor is Mg(2+). As to expression, expressed by the venom gland.

The protein resides in the secreted. It carries out the reaction an N-(acyl)-sphingosylphosphocholine = an N-(acyl)-sphingosyl-1,3-cyclic phosphate + choline. The enzyme catalyses an N-(acyl)-sphingosylphosphoethanolamine = an N-(acyl)-sphingosyl-1,3-cyclic phosphate + ethanolamine. The catalysed reaction is a 1-acyl-sn-glycero-3-phosphocholine = a 1-acyl-sn-glycero-2,3-cyclic phosphate + choline. It catalyses the reaction a 1-acyl-sn-glycero-3-phosphoethanolamine = a 1-acyl-sn-glycero-2,3-cyclic phosphate + ethanolamine. Its function is as follows. Dermonecrotic toxins cleave the phosphodiester linkage between the phosphate and headgroup of certain phospholipids (sphingolipid and lysolipid substrates), forming an alcohol (often choline) and a cyclic phosphate. This toxin acts on sphingomyelin (SM). It may also act on ceramide phosphoethanolamine (CPE), lysophosphatidylcholine (LPC) and lysophosphatidylethanolamine (LPE), but not on lysophosphatidylserine (LPS), and lysophosphatidylglycerol (LPG). It acts by transphosphatidylation, releasing exclusively cyclic phosphate products as second products. Induces dermonecrosis, hemolysis, increased vascular permeability, edema, inflammatory response, and platelet aggregation. The sequence is that of Dermonecrotic toxin SdSicTox-betaIIB2ii from Sicarius cf. damarensis (strain GJB-2008) (Six-eyed sand spider).